A 607-amino-acid chain; its full sequence is Guanine nucleotide-binding protein-like 1 (607 aa).

A compositionally biased stretch (basic residues) spans 1–14 (MPRKKPFSVKQKKK). A disordered region spans residues 1-81 (MPRKKPFSVK…GPRGYDPNRY (81 aa)). Residues 15-26 (QLQDKRERKRGL) show a composition bias toward basic and acidic residues. A phosphoserine mark is found at S32, S33, and S34. Phosphothreonine occurs at positions 48 and 50. Phosphoserine is present on residues S51 and S68. One can recognise a CP-type G domain in the interval 178-418 (WRQLWRVLEM…LCDCPGLIFP (241 aa)). Residue 225–228 (NKVD) participates in GTP binding. A Phosphoserine modification is found at S324. GTP contacts are provided by residues 367 to 374 (GFPNVGKS) and 411 to 415 (DCPGL). Residues 547–607 (GPAGDEEEEE…PYALLGEDEC (61 aa)) form a disordered region. The segment covering 550-584 (GDEEEEEEEELSSSCEEEGEEDRDADEEGEGDEDT) has biased composition (acidic residues). A phosphoserine mark is found at S561, S562, and S563.

This sequence belongs to the TRAFAC class YlqF/YawG GTPase family.

Functionally, possible regulatory or functional link with the histocompatibility cluster. The polypeptide is Guanine nucleotide-binding protein-like 1 (GNL1) (Pongo abelii (Sumatran orangutan)).